A 393-amino-acid polypeptide reads, in one-letter code: Beta-ureidopropionase (393 aa).

The region spanning 72-344 is the CN hydrolase domain; that stretch reads VRVGLVQNRI…DGLLVTELNL (273 aa). Glu119 serves as the catalytic Proton acceptor. The active-site Proton donor is the Lys196. The active-site Nucleophile is the Cys233. Ser378 carries the phosphoserine modification.

The protein belongs to the carbon-nitrogen hydrolase superfamily. BUP family. Homodimer, homotetramer, homooctamer; can also form higher homooligomers.

It is found in the cytoplasm. The enzyme catalyses 3-(carbamoylamino)propanoate + H2O + 2 H(+) = beta-alanine + NH4(+) + CO2. The catalysed reaction is 3-(carbamoylamino)-2-methylpropanoate + H2O + 2 H(+) = (R)-3-amino-2-methylpropanoate + NH4(+) + CO2. It functions in the pathway amino-acid biosynthesis; beta-alanine biosynthesis. In terms of biological role, catalyzes a late step in pyrimidine degradation. Converts N-carbamoyl-beta-alanine (3-ureidopropanoate) into beta-alanine, ammonia and carbon dioxide. Likewise, converts N-carbamoyl-beta-aminoisobutyrate (3-ureidoisobutyrate) into beta-aminoisobutyrate, ammonia and carbon dioxide. The chain is Beta-ureidopropionase (Upb1) from Mus musculus (Mouse).